We begin with the raw amino-acid sequence, 436 residues long: MKGFMIAAPASGSGKTTVTLGLLRALKRRGEVLAPVKAGPDYIDPAYHRAASGVDCFNLDPWAMRPELISALSSRMTESGARVLVAEGMMGLFDGAIDGKGSSADLARLLDLPVVLVVDCARQSHSIAALVWGFSQFRKDVLIEGVILNRVGSPRHEAMLRGALAPLGVPVLGALPRDPALSLPERHLGLVQADEHAGLESFLEQAADVMEAHIDMDALQTIWLRPKRYDAMANVARLKPLGNRIAVARDDAFAFAYMHLFEGWRRRGAEISFFSPLADEAPKADADAIYLPGGYPELHAQRLAGASRFRTAIGDAAARGVTVYGECGGYMVLGKTLEDAAGVHHPMLGLLPLETSFARRKLHLGYRLLEPLGGLPWDMPLKAHEFHYASIVREEKADRLFRVRDASGENLGEAGLRVGSVSGSFMHVIDFSGEAA.

Residues 244–435 enclose the GATase cobBQ-type domain; that stretch reads RIAVARDDAF…MHVIDFSGEA (192 aa). C327 serves as the catalytic Nucleophile.

This sequence belongs to the CobB/CbiA family. The cofactor is Mg(2+).

The enzyme catalyses hydrogenobyrinate + 2 L-glutamine + 2 ATP + 2 H2O = hydrogenobyrinate a,c-diamide + 2 L-glutamate + 2 ADP + 2 phosphate + 2 H(+). It participates in cofactor biosynthesis; adenosylcobalamin biosynthesis; cob(II)yrinate a,c-diamide from precorrin-2 (aerobic route): step 9/10. Catalyzes the ATP-dependent amidation of the two carboxylate groups at positions a and c of hydrogenobyrinate, using either L-glutamine or ammonia as the nitrogen source. The chain is Hydrogenobyrinate a,c-diamide synthase from Brucella abortus biovar 1 (strain 9-941).